Here is a 405-residue protein sequence, read N- to C-terminus: L-cysteine:1D-myo-inositol 2-amino-2-deoxy-alpha-D-glucopyranoside ligase (405 aa).

Cys-43 is a binding site for Zn(2+). L-cysteinyl-5'-AMP-binding positions include 43-46, Thr-58, and 81-83; these read CGIT and NIT. Residues 45 to 55 carry the 'HIGH' region motif; the sequence is ITPYDATHLGH. The short motif at 187-192 is the 'ERGGDP' region element; sequence ERGGDP. Trp-227 provides a ligand contact to L-cysteinyl-5'-AMP. Cys-231 is a Zn(2+) binding site. 249–251 contributes to the L-cysteinyl-5'-AMP binding site; it reads GSD. His-256 provides a ligand contact to Zn(2+). Position 283 (Ile-283) interacts with L-cysteinyl-5'-AMP. Positions 289-293 match the 'KMSKS' region motif; it reads KMSKS.

The protein belongs to the class-I aminoacyl-tRNA synthetase family. MshC subfamily. Monomer. It depends on Zn(2+) as a cofactor.

The catalysed reaction is 1D-myo-inositol 2-amino-2-deoxy-alpha-D-glucopyranoside + L-cysteine + ATP = 1D-myo-inositol 2-(L-cysteinylamino)-2-deoxy-alpha-D-glucopyranoside + AMP + diphosphate + H(+). Its function is as follows. Catalyzes the ATP-dependent condensation of GlcN-Ins and L-cysteine to form L-Cys-GlcN-Ins. In Nakamurella multipartita (strain ATCC 700099 / DSM 44233 / CIP 104796 / JCM 9543 / NBRC 105858 / Y-104) (Microsphaera multipartita), this protein is L-cysteine:1D-myo-inositol 2-amino-2-deoxy-alpha-D-glucopyranoside ligase.